The following is a 236-amino-acid chain: Small ribosomal subunit protein uS2c (236 aa).

It belongs to the universal ribosomal protein uS2 family.

Its subcellular location is the plastid. The protein resides in the chloroplast. In Barbarea verna (Land cress), this protein is Small ribosomal subunit protein uS2c (rps2).